The primary structure comprises 303 residues: MKKKILFWVLGILGVLIIGGGIYAYNVYSSVSNTLKEVHQPLKRDQNNSNVGEKVSKSEPVSILLLGADERGEDKGRSDSLMVITLNPKNNSMKTVSIPRDTYTEIVGKGKSDKINHAYAFGGVDMSVATVENFLNVPINYYIEVNMEGFKDIVDAVGGVDVKNDLEFTQDGHHFAKGNIHLTGDQALAFTRMRKQDPRGDFGRQMRQRQVMQGVIKKGASFSSLTGYGDVLSAIQKNVKTNLTQDQMFDMQKNYKDCLKNSEDIQIPGDGHKAADGIWYYYVPDAAKQDLTNKLRTHLEVTK.

The Cytoplasmic segment spans residues 1–4 (MKKK). The chain crosses the membrane as a helical; Signal-anchor for type II membrane protein span at residues 5–25 (ILFWVLGILGVLIIGGGIYAY). Residues 26–303 (NVYSSVSNTL…KLRTHLEVTK (278 aa)) are Extracellular-facing.

Belongs to the LytR/CpsA/Psr (LCP) family.

The protein localises to the cell membrane. The protein operates within cell wall biogenesis. Functionally, may catalyze the final step in cell wall teichoic acid biosynthesis, the transfer of the anionic cell wall polymers (APs) from their lipid-linked precursor to the cell wall peptidoglycan (PG). In Bacillus anthracis (strain A0248), this protein is Polyisoprenyl-teichoic acid--peptidoglycan teichoic acid transferase TagU.